Consider the following 364-residue polypeptide: Anhydro-N-acetylmuramic acid kinase (364 aa).

An ATP-binding site is contributed by Gly-12 to Asp-19.

This sequence belongs to the anhydro-N-acetylmuramic acid kinase family.

It carries out the reaction 1,6-anhydro-N-acetyl-beta-muramate + ATP + H2O = N-acetyl-D-muramate 6-phosphate + ADP + H(+). The protein operates within amino-sugar metabolism; 1,6-anhydro-N-acetylmuramate degradation. It functions in the pathway cell wall biogenesis; peptidoglycan recycling. Its function is as follows. Catalyzes the specific phosphorylation of 1,6-anhydro-N-acetylmuramic acid (anhMurNAc) with the simultaneous cleavage of the 1,6-anhydro ring, generating MurNAc-6-P. Is required for the utilization of anhMurNAc either imported from the medium or derived from its own cell wall murein, and thus plays a role in cell wall recycling. The chain is Anhydro-N-acetylmuramic acid kinase from Gamma-proteobacterium EBAC31A08.